A 1373-amino-acid chain; its full sequence is DNA-directed RNA polymerase subunit beta (1373 aa).

This sequence belongs to the RNA polymerase beta chain family. The RNAP catalytic core consists of 2 alpha, 1 beta, 1 beta' and 1 omega subunit. When a sigma factor is associated with the core the holoenzyme is formed, which can initiate transcription.

The catalysed reaction is RNA(n) + a ribonucleoside 5'-triphosphate = RNA(n+1) + diphosphate. Its function is as follows. DNA-dependent RNA polymerase catalyzes the transcription of DNA into RNA using the four ribonucleoside triphosphates as substrates. The chain is DNA-directed RNA polymerase subunit beta from Rickettsia akari (strain Hartford).